We begin with the raw amino-acid sequence, 635 residues long: 5-aminolevulinate synthase, non-specific, mitochondrial (635 aa).

The N-terminal 56 residues, 1–56 (MEAVVRRCPFLARVSQAFLQKAGPSLLFYAQHCPKMMEAAPPAAARGLATSASRGQ), are a transit peptide targeting the mitochondrion. Positions 44–66 (AARGLATSASRGQQVEETPAAQP) are enriched in low complexity. Residues 44–94 (AARGLATSASRGQQVEETPAAQPEAKKAKEVAQQNTDGSQPPAGHPPAAAV) form a disordered region. Substrate is bound by residues Arg212, Ser329, and Lys348. The pyridoxal 5'-phosphate site is built by Ser381, His409, and Thr437. Lys440 is an active-site residue. Lys440 carries the post-translational modification N6-(pyridoxal phosphate)lysine. Thr469 and Thr470 together coordinate pyridoxal 5'-phosphate. A substrate-binding site is contributed by Thr557.

This sequence belongs to the class-II pyridoxal-phosphate-dependent aminotransferase family. As to quaternary structure, homodimer. The cofactor is pyridoxal 5'-phosphate. As to expression, ubiquitous.

It is found in the mitochondrion inner membrane. The enzyme catalyses succinyl-CoA + glycine + H(+) = 5-aminolevulinate + CO2 + CoA. It participates in porphyrin-containing compound metabolism; protoporphyrin-IX biosynthesis; 5-aminolevulinate from glycine: step 1/1. Its function is as follows. Catalyzes the pyridoxal 5'-phosphate (PLP)-dependent condensation of succinyl-CoA and glycine to form aminolevulinic acid (ALA), with CoA and CO2 as by-products. This chain is 5-aminolevulinate synthase, non-specific, mitochondrial (ALAS1), found in Gallus gallus (Chicken).